A 311-amino-acid chain; its full sequence is Olfactory receptor 5L1 (311 aa).

At 1–25 (MGKENCTTVAEFILLGLSDVPELRV) the chain is on the extracellular side. N-linked (GlcNAc...) asparagine glycosylation occurs at N5. A helical transmembrane segment spans residues 26–46 (CLFLLFLLIYGVTLLANLGMI). Residues 47 to 54 (ALIQVSSR) lie on the Cytoplasmic side of the membrane. The helical transmembrane segment at 55–75 (LHTPMYFFLSHLSSVDFCYSS) threads the bilayer. The Extracellular portion of the chain corresponds to 76–99 (IIVPKMLANIFNKDKAISFLGCMV). Residues C97 and C189 are joined by a disulfide bond. Residues 100 to 120 (QFYLFCTCVVTEVFLLAVMAY) traverse the membrane as a helical segment. Over 121 to 139 (DRFVAICNPLLYTVTMSWK) the chain is Cytoplasmic. Residues 140–160 (VRVELASCCYFCGTVCSLIHL) traverse the membrane as a helical segment. The Extracellular portion of the chain corresponds to 161–196 (CLALRIPFYRSNVINHFFCDLPPVLSLACSDITVNE). N-linked (GlcNAc...) asparagine glycosylation is present at N195. A helical membrane pass occupies residues 197–217 (TLLFLVATLNESVTIMIILTS). Over 218–237 (YLLILTTILKMGSAEGRHKA) the chain is Cytoplasmic. Residues 238–258 (FSTCASHLTAITVFHGTVLSI) traverse the membrane as a helical segment. Over 259–271 (YCRPSSGNSGDAD) the chain is Extracellular. The helical transmembrane segment at 272–292 (KVATVFYTVVIPMLNSVIYSL) threads the bilayer. Residues 293–311 (RNKDVKEALRKVMGSKIHS) lie on the Cytoplasmic side of the membrane.

The protein belongs to the G-protein coupled receptor 1 family.

The protein localises to the cell membrane. Odorant receptor. The protein is Olfactory receptor 5L1 (OR5L1) of Homo sapiens (Human).